A 282-amino-acid polypeptide reads, in one-letter code: Plant cysteine oxidase 3 (282 aa).

3 residues coordinate Fe cation: histidine 131, histidine 133, and histidine 202.

The protein belongs to the cysteine dioxygenase family. The cofactor is Fe(2+).

It localises to the nucleus. The protein resides in the cytoplasm. It catalyses the reaction L-cysteine + O2 = 3-sulfino-L-alanine + H(+). Its function is as follows. Catalyzes the oxidation of N-terminal cysteine residues (N-Cys), thus preparing the protein for N-end rule pathway-mediated proteasomal degradation, upstream of the N-end rule enzymes ATE1, ATE2 and PRT6. Controls the preparation of the group VII ethylene response factor (ERF-VII) proteins for degradation via the 26S proteasome N-end rule pathway. Acts as an oxygen sensor that controls the stability of ERF-VII proteins, which are stabilized in flooding-induced hypoxia, and regulate transcriptional adaptation to these adverse conditions. In Arabidopsis thaliana (Mouse-ear cress), this protein is Plant cysteine oxidase 3.